Consider the following 132-residue polypeptide: Small ribosomal subunit protein uS8 (132 aa).

The protein belongs to the universal ribosomal protein uS8 family. Part of the 30S ribosomal subunit. Contacts proteins S5 and S12.

Its function is as follows. One of the primary rRNA binding proteins, it binds directly to 16S rRNA central domain where it helps coordinate assembly of the platform of the 30S subunit. The protein is Small ribosomal subunit protein uS8 of Mesorhizobium japonicum (strain LMG 29417 / CECT 9101 / MAFF 303099) (Mesorhizobium loti (strain MAFF 303099)).